We begin with the raw amino-acid sequence, 206 residues long: Thiamine-phosphate synthase (206 aa).

4-amino-2-methyl-5-(diphosphooxymethyl)pyrimidine is bound by residues 37 to 41 (QYRNK) and Asn69. Positions 70 and 89 each coordinate Mg(2+). Ser108 lines the 4-amino-2-methyl-5-(diphosphooxymethyl)pyrimidine pocket. Position 135–137 (135–137 (SST)) interacts with 2-[(2R,5Z)-2-carboxy-4-methylthiazol-5(2H)-ylidene]ethyl phosphate. Lys138 serves as a coordination point for 4-amino-2-methyl-5-(diphosphooxymethyl)pyrimidine. Residues Gly165 and 185–186 (IS) each bind 2-[(2R,5Z)-2-carboxy-4-methylthiazol-5(2H)-ylidene]ethyl phosphate.

The protein belongs to the thiamine-phosphate synthase family. It depends on Mg(2+) as a cofactor.

It carries out the reaction 2-[(2R,5Z)-2-carboxy-4-methylthiazol-5(2H)-ylidene]ethyl phosphate + 4-amino-2-methyl-5-(diphosphooxymethyl)pyrimidine + 2 H(+) = thiamine phosphate + CO2 + diphosphate. The catalysed reaction is 2-(2-carboxy-4-methylthiazol-5-yl)ethyl phosphate + 4-amino-2-methyl-5-(diphosphooxymethyl)pyrimidine + 2 H(+) = thiamine phosphate + CO2 + diphosphate. The enzyme catalyses 4-methyl-5-(2-phosphooxyethyl)-thiazole + 4-amino-2-methyl-5-(diphosphooxymethyl)pyrimidine + H(+) = thiamine phosphate + diphosphate. Its pathway is cofactor biosynthesis; thiamine diphosphate biosynthesis; thiamine phosphate from 4-amino-2-methyl-5-diphosphomethylpyrimidine and 4-methyl-5-(2-phosphoethyl)-thiazole: step 1/1. Its function is as follows. Condenses 4-methyl-5-(beta-hydroxyethyl)thiazole monophosphate (THZ-P) and 2-methyl-4-amino-5-hydroxymethyl pyrimidine pyrophosphate (HMP-PP) to form thiamine monophosphate (TMP). In Azoarcus sp. (strain BH72), this protein is Thiamine-phosphate synthase.